The chain runs to 341 residues: Mitochondrial glutathione transporter SLC25A40 (341 aa).

3 Solcar repeats span residues 14 to 132 (ITPS…LRDI), 140 to 224 (RAEI…VKQS), and 234 to 328 (PTFA…GKSF). The next 6 membrane-spanning stretches (helical) occupy residues 20–40 (MIAS…LDVV), 104–124 (LWSG…IYFT), 143–163 (IASL…ISPL), 200–221 (WGPT…YELV), 236–256 (FAIS…VTLP), and 299–319 (GLFA…AIMI).

This sequence belongs to the mitochondrial carrier (TC 2.A.29) family.

The protein localises to the mitochondrion inner membrane. It carries out the reaction glutathione(in) = glutathione(out). Probable mitochondrial transporter required for glutathione import into mitochondria. Glutathione, which plays key roles in oxidative metabolism, is produced exclusively in the cytosol and is imported in many organelles. Mitochondrial glutathione is required for the activity and stability of proteins containing iron-sulfur clusters. This Xenopus tropicalis (Western clawed frog) protein is Mitochondrial glutathione transporter SLC25A40.